The following is a 204-amino-acid chain: Thymidylate kinase (204 aa).

11 to 18 (GLDKSGKT) provides a ligand contact to ATP.

It belongs to the thymidylate kinase family.

The enzyme catalyses dTMP + ATP = dTDP + ADP. It participates in pyrimidine metabolism; dTTP biosynthesis. This Bos taurus (Bovine) protein is Thymidylate kinase (TMK).